The primary structure comprises 528 residues: Negative elongation factor A (528 aa).

The region spanning 89 to 248 is the HDAg domain; that stretch reads WVLMVADILK…TPIPPSRTLL (160 aa). An NELF-C/D-binding region spans residues 125–188; the sequence is REKVGECEAS…LQKSTETAQQ (64 aa). A Phosphothreonine modification is found at Thr157. Residues 189 to 248 form an RNAPII-binding region; it reads LKRSAGVPFHAKGRGLLRKMDTTTPLKGIPKQAPFRSPTAPSVFSPTGNRTPIPPSRTLL. The disordered stretch occupies residues 215–245; sequence KGIPKQAPFRSPTAPSVFSPTGNRTPIPPSR. A phosphoserine mark is found at Ser225 and Ser233. The segment covering 227-238 has biased composition (polar residues); it reads TAPSVFSPTGNR. Phosphothreonine is present on Thr277. The span at 320 to 341 shows a compositional bias: low complexity; it reads PSTSYLPSTPSVVPASSYIPSS. Residues 320–409 form a disordered region; sequence PSTSYLPSTP…PPAVAPTTQT (90 aa). At Ser363 the chain carries Phosphoserine.

The protein belongs to the NELF-A family. In terms of assembly, the NELF complex is composed of NELFA, NELFB, NELFCD (isoform NELF-C or isoform NELF-D) and NELFE; NELFA and NELFCD form a stable subcomplex that binds to the N-terminus of NELFB. In vitro, the NELFA:NELFCD subcomplex binds to ssDNA and ssRNA in a sequence- and structure-dependent manner. Interacts with the RNA polymerase II complex when it is not phosphorylated by P-TEFb. As to expression, ubiquitous. Expressed in heart, brain, placenta, liver, skeletal muscle, kidney and pancreas. Expressed at lower level in adult lung. Expressed in fetal brain, lung, liver and kidney.

The protein resides in the nucleus. Functionally, essential component of the NELF complex, a complex that negatively regulates the elongation of transcription by RNA polymerase II. The NELF complex, which acts via an association with the DSIF complex and causes transcriptional pausing, is counteracted by the P-TEFb kinase complex. Its function is as follows. (Microbial infection) The NELF complex is involved in HIV-1 latency possibly involving recruitment of PCF11 to paused RNA polymerase II. The sequence is that of Negative elongation factor A (NELFA) from Homo sapiens (Human).